A 97-amino-acid chain; its full sequence is Nucleoid-associated protein HPP12_0031 (97 aa).

This sequence belongs to the YbaB/EbfC family. In terms of assembly, homodimer.

It is found in the cytoplasm. It localises to the nucleoid. Its function is as follows. Binds to DNA and alters its conformation. May be involved in regulation of gene expression, nucleoid organization and DNA protection. The chain is Nucleoid-associated protein HPP12_0031 from Helicobacter pylori (strain P12).